The following is a 620-amino-acid chain: 1-deoxy-D-xylulose-5-phosphate synthase (620 aa).

Residues His-80 and 121 to 123 each bind thiamine diphosphate; that span reads GHS. Asp-152 is a binding site for Mg(2+). Thiamine diphosphate is bound by residues 153 to 154, Asn-181, Tyr-288, and Glu-370; that span reads GA. Asn-181 is a Mg(2+) binding site.

The protein belongs to the transketolase family. DXPS subfamily. In terms of assembly, homodimer. It depends on Mg(2+) as a cofactor. The cofactor is thiamine diphosphate.

It carries out the reaction D-glyceraldehyde 3-phosphate + pyruvate + H(+) = 1-deoxy-D-xylulose 5-phosphate + CO2. It participates in metabolic intermediate biosynthesis; 1-deoxy-D-xylulose 5-phosphate biosynthesis; 1-deoxy-D-xylulose 5-phosphate from D-glyceraldehyde 3-phosphate and pyruvate: step 1/1. Its function is as follows. Catalyzes the acyloin condensation reaction between C atoms 2 and 3 of pyruvate and glyceraldehyde 3-phosphate to yield 1-deoxy-D-xylulose-5-phosphate (DXP). In Enterobacter sp. (strain 638), this protein is 1-deoxy-D-xylulose-5-phosphate synthase.